A 194-amino-acid polypeptide reads, in one-letter code: Imidazoleglycerol-phosphate dehydratase (194 aa).

This sequence belongs to the imidazoleglycerol-phosphate dehydratase family.

The protein localises to the cytoplasm. The catalysed reaction is D-erythro-1-(imidazol-4-yl)glycerol 3-phosphate = 3-(imidazol-4-yl)-2-oxopropyl phosphate + H2O. It functions in the pathway amino-acid biosynthesis; L-histidine biosynthesis; L-histidine from 5-phospho-alpha-D-ribose 1-diphosphate: step 6/9. This is Imidazoleglycerol-phosphate dehydratase from Bacillus cereus (strain ZK / E33L).